A 204-amino-acid chain; its full sequence is uncharacterized protein (204 aa).

The N-terminal stretch at 1-16 (MKYTFLAVLSAVTVLA) is a signal peptide.

The protein resides in the secreted. This is an uncharacterized protein from Arthroderma benhamiae (strain ATCC MYA-4681 / CBS 112371) (Trichophyton mentagrophytes).